Here is a 557-residue protein sequence, read N- to C-terminus: Probable asparagine synthetase [glutamine-hydrolyzing] (557 aa).

Cys2 functions as the For GATase activity in the catalytic mechanism. The Glutamine amidotransferase type-2 domain maps to 2-188 (CGILAVHHVA…PGHYYDSETK (187 aa)). L-glutamine-binding positions include 50 to 54 (RLAIV), 75 to 77 (NGE), and Asp99. One can recognise an Asparagine synthetase domain in the interval 196–531 (PSWWDENKIP…PRQCADTVMR (336 aa)). ATP-binding positions include Leu235, Ile280, and 354 to 355 (SG). 2 positions are modified to phosphoserine: Ser391 and Ser489.

The protein resides in the cytoplasm. It is found in the nucleus. It carries out the reaction L-aspartate + L-glutamine + ATP + H2O = L-asparagine + L-glutamate + AMP + diphosphate + H(+). The protein operates within amino-acid biosynthesis; L-asparagine biosynthesis; L-asparagine from L-aspartate (L-Gln route): step 1/1. The polypeptide is Probable asparagine synthetase [glutamine-hydrolyzing] (asn1) (Schizosaccharomyces pombe (strain 972 / ATCC 24843) (Fission yeast)).